The following is a 347-amino-acid chain: D-alanine--D-alanine ligase (347 aa).

In terms of domain architecture, ATP-grasp spans 131–333 (KRVLESAGIA…YPELIERLVD (203 aa)). 161–216 (EEKLAYPVFTKPSNMGSSVGISKSENQEELRPALELAFRYDSRVLVEQGVNAREIE) is an ATP binding site. Mg(2+)-binding residues include D287, E300, and N302.

Belongs to the D-alanine--D-alanine ligase family. The cofactor is Mg(2+). Requires Mn(2+) as cofactor.

It is found in the cytoplasm. It carries out the reaction 2 D-alanine + ATP = D-alanyl-D-alanine + ADP + phosphate + H(+). The protein operates within cell wall biogenesis; peptidoglycan biosynthesis. In terms of biological role, cell wall formation. This chain is D-alanine--D-alanine ligase, found in Streptococcus pneumoniae (strain Taiwan19F-14).